The primary structure comprises 124 residues: Autophagy-related protein 8 (124 aa).

Gly116 carries the Phosphatidylethanolamine amidated glycine lipid modification. Positions 117 to 124 are cleaved as a propeptide — removed in mature form; sequence GAGPLLEK.

This sequence belongs to the ATG8 family. As to quaternary structure, conjugation to phosphatidylethanolamine (PE) leads to homodimerization. Interacts with ATG1, ATG3, ATG4, ATG7 and ATG12. The C-terminal 8 residues of ATG8 are removed by ATG4 to expose Gly-116 at the C-terminus. This Gly-116 forms then a thioester bond with the 'Cys-550' of ATG7 (E1-like activating enzyme) before being transferred to the 'Cys-244' of ATG3 (the specific E2 conjugating enzyme), in order to be finally amidated with phosphatidylethanolamine. This lipid modification anchors ATG8 to membranes and can be reversed by ATG4, releasing soluble ATG8.

The protein resides in the cytoplasmic vesicle. It is found in the cvt vesicle membrane. It localises to the autophagosome membrane. The protein localises to the vacuole membrane. Functionally, ubiquitin-like modifier involved in cytoplasm to vacuole transport (Cvt) vesicles and autophagosome formation. With ATG4, mediates the delivery of the vesicles and autophagosomes to the vacuole via the microtubule cytoskeleton. Required for selective autophagic degradation of the nucleus (nucleophagy) as well as for mitophagy which contributes to regulate mitochondrial quantity and quality by eliminating the mitochondria to a basal level to fulfill cellular energy requirements and preventing excess ROS production. Also participates in membrane fusion events that take place in the early secretory pathway. Also involved in endoplasmic reticulum-specific autophagic process and is essential for the survival of cells subjected to severe ER stress. The ATG8-PE conjugate mediates tethering between adjacent membranes and stimulates membrane hemifusion, leading to expansion of the autophagosomal membrane during autophagy. Moreover not only conjugation, but also subsequent ATG8-PE deconjugation is an important step required to facilitate multiple events during macroautophagy, and especially for efficient autophagosome biogenesis, the assembly of ATG9-containing tubulovesicular clusters into phagophores/autophagosomes, and for the disassembly of PAS-associated ATG components. The polypeptide is Autophagy-related protein 8 (Kluyveromyces marxianus (strain DMKU3-1042 / BCC 29191 / NBRC 104275) (Yeast)).